Consider the following 437-residue polypeptide: Enolase (437 aa).

Glutamine 162 contacts (2R)-2-phosphoglycerate. Glutamate 204 serves as the catalytic Proton donor. Aspartate 251, glutamate 297, and aspartate 324 together coordinate Mg(2+). (2R)-2-phosphoglycerate is bound by residues lysine 349, arginine 378, serine 379, and lysine 400. Residue lysine 349 is the Proton acceptor of the active site.

This sequence belongs to the enolase family. Mg(2+) serves as cofactor.

Its subcellular location is the cytoplasm. The protein localises to the secreted. It localises to the cell surface. It carries out the reaction (2R)-2-phosphoglycerate = phosphoenolpyruvate + H2O. The protein operates within carbohydrate degradation; glycolysis; pyruvate from D-glyceraldehyde 3-phosphate: step 4/5. Catalyzes the reversible conversion of 2-phosphoglycerate (2-PG) into phosphoenolpyruvate (PEP). It is essential for the degradation of carbohydrates via glycolysis. This chain is Enolase, found in Chlorobium luteolum (strain DSM 273 / BCRC 81028 / 2530) (Pelodictyon luteolum).